A 470-amino-acid polypeptide reads, in one-letter code: Small ribosomal subunit protein bS1m (470 aa).

The interval 436 to 470 (FKKIPMTAARLRGRYENSDSPSSPTMSGSSGYGLR) is disordered. Low complexity predominate over residues 453–464 (SDSPSSPTMSGS).

The protein belongs to the bacterial ribosomal protein bS1 family. In terms of assembly, component of the mitochondrial small ribosomal subunit (mt-SSU). Mature N.crassa 74S mitochondrial ribosomes consist of a small (37S) and a large (54S) subunit. The 37S small subunit contains a 16S ribosomal RNA (16S mt-rRNA) and 32 different proteins. The 54S large subunit contains a 23S rRNA (23S mt-rRNA) and 42 different proteins.

Its subcellular location is the mitochondrion. In terms of biological role, component of the mitochondrial ribosome (mitoribosome), a dedicated translation machinery responsible for the synthesis of mitochondrial genome-encoded proteins, including at least some of the essential transmembrane subunits of the mitochondrial respiratory chain. The mitoribosomes are attached to the mitochondrial inner membrane and translation products are cotranslationally integrated into the membrane. The sequence is that of Small ribosomal subunit protein bS1m (mrp51) from Neurospora crassa (strain ATCC 24698 / 74-OR23-1A / CBS 708.71 / DSM 1257 / FGSC 987).